A 360-amino-acid polypeptide reads, in one-letter code: S-adenosylmethionine:tRNA ribosyltransferase-isomerase (360 aa).

This sequence belongs to the QueA family. Monomer.

The protein localises to the cytoplasm. It carries out the reaction 7-aminomethyl-7-carbaguanosine(34) in tRNA + S-adenosyl-L-methionine = epoxyqueuosine(34) in tRNA + adenine + L-methionine + 2 H(+). The protein operates within tRNA modification; tRNA-queuosine biosynthesis. Functionally, transfers and isomerizes the ribose moiety from AdoMet to the 7-aminomethyl group of 7-deazaguanine (preQ1-tRNA) to give epoxyqueuosine (oQ-tRNA). The chain is S-adenosylmethionine:tRNA ribosyltransferase-isomerase from Rhodopseudomonas palustris (strain TIE-1).